Reading from the N-terminus, the 383-residue chain is Meiotically up-regulated gene 93 protein (383 aa).

One copy of the TPR repeat lies at 75–108; it reads KKVIWRRGLAYLRLGHPHLANRDWEHSLELDPNN.

The protein localises to the cytoplasm. It localises to the nucleus. Has a role in meiosis. The polypeptide is Meiotically up-regulated gene 93 protein (mug93) (Schizosaccharomyces pombe (strain 972 / ATCC 24843) (Fission yeast)).